The primary structure comprises 185 residues: Nuclear transcription factor Y subunit B-3 (185 aa).

The span at 1–36 (MADGPGSPGGGGGSHESGSPRGGGGGGGGGGGGGGV) shows a compositional bias: gly residues. Residues 1–39 (MADGPGSPGGGGGSHESGSPRGGGGGGGGGGGGGGVREQ) are disordered. The DNA-binding element occupies 43–49 (LPIANIS). A subunit association domain (SAD) region spans residues 70 to 81 (VQECVSEFISFI). The tract at residues 145–164 (KDVLGSHGGSSSSAQGMGQQ) is disordered. Positions 153–164 (GSSSSAQGMGQQ) are enriched in low complexity.

This sequence belongs to the NFYB/HAP3 subunit family. Heterotrimeric transcription factor composed of three components, NF-YA, NF-YB and NF-YC. NF-YB and NF-YC must interact and dimerize for NF-YA association and DNA binding. Ubiquitous.

The protein localises to the nucleus. Component of the NF-Y/HAP transcription factor complex. The NF-Y complex stimulates the transcription of various genes by recognizing and binding to a CCAAT motif in promoters. May regulate the expression of photosynthetic genes, and may be involved in chloroplast and amyloplast development. This Oryza sativa subsp. japonica (Rice) protein is Nuclear transcription factor Y subunit B-3 (NFYB3).